A 242-amino-acid chain; its full sequence is Dehydration-responsive element-binding protein 1J (242 aa).

The segment covering 20-29 (SSATTAATAT) has biased composition (low complexity). Residues 20–44 (SSATTAATATGPASPKRPAGRTKFQ) form a disordered region. A DNA-binding region (AP2/ERF) is located at residues 50–109 (VFRGVRRRGRAGRWVCEVRVPGSRGDRLWVGTFDTAEEAARAHDAAMLAMCGASASLNFT). The tract at residues 143–184 (FQRRGSTAATATATSGDAASTAPPSSSPVLSPNDDNASSAST) is disordered. The span at 148 to 184 (STAATATATSGDAASTAPPSSSPVLSPNDDNASSAST) shows a compositional bias: low complexity.

It belongs to the AP2/ERF transcription factor family. ERF subfamily.

The protein resides in the nucleus. Its function is as follows. Transcriptional activator that binds specifically to the DNA sequence 5'-[AG]CCGAC-3'. Binding to the C-repeat/DRE element mediates high salinity- and dehydration-inducible transcription. This Oryza sativa subsp. indica (Rice) protein is Dehydration-responsive element-binding protein 1J (DREB1J).